Here is a 367-residue protein sequence, read N- to C-terminus: Putative F-box protein At4g10190 (367 aa).

An F-box domain is found at Lys-3 to Ala-53.

The polypeptide is Putative F-box protein At4g10190 (Arabidopsis thaliana (Mouse-ear cress)).